The primary structure comprises 468 residues: MITTRFAPSPTGFLHVGGVRTALFSWLYAKNNNGKFILRIEDTDLERSTQEAVDAILDGMSWLGLKNDGEIYYQTKRFDRYKEVIQELIADGKAYYCSCSKERLEELREYQQANNLKTGYDGKCRDANYVPQQGESYVVRFKNPQDGVVSWDDAVKGRISISNHELDDMIIQRADGSPTYNFCVVVDDIDMAITHIIRGDDHVNNTPKQINIYKALNANVPVFAHVPMILGPDGAKLSKRHGAVNVMQYREDGYLPQAILNYLVRLGWSHGDQEIFSIEEMIKAFNLEHINASPSRFDFEKLKWLNKHYIKESKFDDIQTEVEYHFAKTGLDISNGPDLKELVAVMAEKVDTLVELAEKSSYFYSDDISYDENAVKKHIKASTGEIFVKLLENFEALDAQQWQDPDVLHNIVSTTAEQCQVGMGKVGMPLRVAITGSGQSPDIGITLKLLGKNKVVARLTKALEELCK.

Positions 8-18 (PSPTGFLHVGG) match the 'HIGH' region motif. Cysteine 97, cysteine 99, cysteine 124, and aspartate 126 together coordinate Zn(2+). Positions 236-240 (KLSKR) match the 'KMSKS' region motif. Lysine 239 lines the ATP pocket.

It belongs to the class-I aminoacyl-tRNA synthetase family. Glutamate--tRNA ligase type 1 subfamily. In terms of assembly, monomer. It depends on Zn(2+) as a cofactor.

The protein localises to the cytoplasm. The enzyme catalyses tRNA(Glu) + L-glutamate + ATP = L-glutamyl-tRNA(Glu) + AMP + diphosphate. Functionally, catalyzes the attachment of glutamate to tRNA(Glu) in a two-step reaction: glutamate is first activated by ATP to form Glu-AMP and then transferred to the acceptor end of tRNA(Glu). This Francisella tularensis subsp. novicida (strain U112) protein is Glutamate--tRNA ligase.